The primary structure comprises 257 residues: Large ribosomal subunit protein uL2 (257 aa).

The disordered stretch occupies residues 207–231 (VEHPFGGGNHQHIGKPSTIRRDAPA).

The protein belongs to the universal ribosomal protein uL2 family. As to quaternary structure, component of the large ribosomal subunit.

The protein localises to the cytoplasm. Functionally, component of the large ribosomal subunit. The ribosome is a large ribonucleoprotein complex responsible for the synthesis of proteins in the cell. The polypeptide is Large ribosomal subunit protein uL2 (rpl8) (Xenopus laevis (African clawed frog)).